The following is a 221-amino-acid chain: Endonuclease V (221 aa).

Residues D44 and D112 each contribute to the Mg(2+) site.

This sequence belongs to the endonuclease V family. Mg(2+) is required as a cofactor.

The protein resides in the cytoplasm. The enzyme catalyses Endonucleolytic cleavage at apurinic or apyrimidinic sites to products with a 5'-phosphate.. DNA repair enzyme involved in the repair of deaminated bases. Selectively cleaves double-stranded DNA at the second phosphodiester bond 3' to a deoxyinosine leaving behind the intact lesion on the nicked DNA. The sequence is that of Endonuclease V from Nostoc sp. (strain PCC 7120 / SAG 25.82 / UTEX 2576).